Consider the following 344-residue polypeptide: Cyclin-dependent kinase 20 (344 aa).

Positions 4-288 constitute a Protein kinase domain; sequence YSILGRIGEG…ARQALLHPYF (285 aa). Residues 10–18 and lysine 33 contribute to the ATP site; that span reads IGEGAHGIV. Catalysis depends on aspartate 127, which acts as the Proton acceptor.

Belongs to the protein kinase superfamily. CMGC Ser/Thr protein kinase family. CDC2/CDKX subfamily. In terms of assembly, monomer. Interacts with tbc1d32.

Its subcellular location is the nucleus. The protein resides in the cytoplasm. It localises to the cell projection. The protein localises to the cilium. The enzyme catalyses L-seryl-[protein] + ATP = O-phospho-L-seryl-[protein] + ADP + H(+). It carries out the reaction L-threonyl-[protein] + ATP = O-phospho-L-threonyl-[protein] + ADP + H(+). In terms of biological role, involved in cell growth. Activates cdk2, a kinase involved in the control of the cell cycle, by phosphorylating residue 'Thr-160'. Required for high-level Shh responses in the developing neural tube. Together with tbc1d32, controls the structure of the primary cilium by coordinating assembly of the ciliary membrane and axoneme, allowing gli2 to be properly activated in response to SHH signaling. The protein is Cyclin-dependent kinase 20 (cdk20) of Danio rerio (Zebrafish).